The sequence spans 92 residues: uncharacterized protein (92 aa).

This is an uncharacterized protein from Saccharomyces cerevisiae (strain ATCC 204508 / S288c) (Baker's yeast).